A 521-amino-acid chain; its full sequence is Maturase K (521 aa).

The protein belongs to the intron maturase 2 family. MatK subfamily.

It is found in the plastid. Its subcellular location is the chloroplast. Usually encoded in the trnK tRNA gene intron. Probably assists in splicing its own and other chloroplast group II introns. The sequence is that of Maturase K from Anthericum liliago (St-Bernard's lily).